The primary structure comprises 54 residues: Large ribosomal subunit protein bL33A (54 aa).

It belongs to the bacterial ribosomal protein bL33 family.

This is Large ribosomal subunit protein bL33A from Mycolicibacterium paratuberculosis (strain ATCC BAA-968 / K-10) (Mycobacterium paratuberculosis).